The following is a 1773-amino-acid chain: Mucin-22 (1773 aa).

The first 26 residues, 1–26, serve as a signal peptide directing secretion; the sequence is MRRGNISPAFWFLWLLLFGLLGPSSE. The Extracellular portion of the chain corresponds to 27–1660; sequence NTTAFTKGSD…VIKPSGYLQP (1634 aa). Disordered stretches follow at residues 61–102, 176–357, 372–405, 434–572, 590–674, 754–1026, 1064–1485, and 1603–1639; these read TGSK…TDSG, TMAS…SETT, MGSE…VGSE, SETI…STAS, TVGS…EGSE, DTTT…ETTM, TTIA…GSET, and MGAS…SMGT. The tract at residues 153–1514 is 124 X 10 AA approximate repeats; sequence MASSTTSTAG…PTATSLTGSE (1362 aa). A compositionally biased stretch (low complexity) spans 178 to 243; sequence ASTTGSETAT…GSEATTTSTA (66 aa). Residues 248–258 show a composition bias toward polar residues; the sequence is ITASSMSSETT. Residues 262-357 are compositionally biased toward low complexity; that stretch reads AAGSNTTTAS…TVSTAGSETT (96 aa). Low complexity-rich tracts occupy residues 440-481 and 490-546; these read STAG…AAST and STAG…SEPT. Positions 547-572 are enriched in polar residues; it reads MASTMGSETTMASTIGPETTKVSTAS. Composition is skewed to low complexity over residues 755–1025 and 1064–1465; these read TTTA…SETT and TTIA…GSET. 2 stretches are compositionally biased toward polar residues: residues 1466–1485 and 1615–1639; these read NTAC…GSET and RTTT…SMGT. A helical membrane pass occupies residues 1661-1681; that stretch reads WAIILISLAAVVAAVGLSVGL. The Cytoplasmic segment spans residues 1682–1773; the sequence is SFCLRNLFFP…GGHYGHGGGH (92 aa).

Expressed in lung by serous cells of the submucosal gland (at protein level). Detected in the placenta, lung and testis.

The protein localises to the membrane. The polypeptide is Mucin-22 (MUC22) (Homo sapiens (Human)).